A 195-amino-acid polypeptide reads, in one-letter code: NADH dehydrogenase [ubiquinone] iron-sulfur protein 3 (195 aa).

It belongs to the complex I 30 kDa subunit family. In terms of assembly, complex I is composed of about 45 different subunits. This is a component of the iron-sulfur (IP) fragment of the enzyme.

It is found in the mitochondrion inner membrane. It catalyses the reaction a ubiquinone + NADH + 5 H(+)(in) = a ubiquinol + NAD(+) + 4 H(+)(out). Functionally, core subunit of the mitochondrial membrane respiratory chain NADH dehydrogenase (Complex I) that is believed to belong to the minimal assembly required for catalysis. Complex I functions in the transfer of electrons from NADH to the respiratory chain. The immediate electron acceptor for the enzyme is believed to be ubiquinone. This chain is NADH dehydrogenase [ubiquinone] iron-sulfur protein 3 (NAD9), found in Marchantia polymorpha (Common liverwort).